A 709-amino-acid polypeptide reads, in one-letter code: ATP-binding cassette sub-family F member 3 (709 aa).

The residue at position 2 (Ala-2) is an N-acetylalanine. Ser-83 carries the phosphoserine modification. Positions Arg-129–Leu-143 are enriched in basic and acidic residues. The disordered stretch occupies residues Arg-129–Gly-171. A phosphoserine mark is found at Ser-155, Ser-157, and Ser-161. The span at Ser-161 to Gly-171 shows a compositional bias: basic and acidic residues. 2 consecutive ABC transporter domains span residues Val-178–Gln-424 and Leu-492–Gly-707. ATP is bound at residue Gly-210 to Thr-217. A Phosphoserine modification is found at Ser-283. Residue Gly-525–Ser-532 coordinates ATP.

This sequence belongs to the ABC transporter superfamily. ABCF family. EF3 subfamily.

Its function is as follows. Displays an antiviral effect against flaviviruses such as west Nile virus (WNV) in the presence of OAS1B. The protein is ATP-binding cassette sub-family F member 3 (ABCF3) of Homo sapiens (Human).